Consider the following 151-residue polypeptide: Methylated-DNA--protein-cysteine methyltransferase (151 aa).

The Nucleophile; methyl group acceptor role is filled by C119.

The protein belongs to the MGMT family.

It localises to the cytoplasm. It carries out the reaction a 6-O-methyl-2'-deoxyguanosine in DNA + L-cysteinyl-[protein] = S-methyl-L-cysteinyl-[protein] + a 2'-deoxyguanosine in DNA. The enzyme catalyses a 4-O-methyl-thymidine in DNA + L-cysteinyl-[protein] = a thymidine in DNA + S-methyl-L-cysteinyl-[protein]. Involved in the cellular defense against the biological effects of O6-methylguanine (O6-MeG) and O4-methylthymine (O4-MeT) in DNA. Repairs the methylated nucleobase in DNA by stoichiometrically transferring the methyl group to a cysteine residue in the enzyme. This is a suicide reaction: the enzyme is irreversibly inactivated. The protein is Methylated-DNA--protein-cysteine methyltransferase of Saccharolobus islandicus (strain Y.N.15.51 / Yellowstone #2) (Sulfolobus islandicus).